The sequence spans 287 residues: Eukaryotic translation initiation factor 3 subunit G (287 aa).

A disordered region spans residues 163 to 207 (EEDLESKEKDTKLGPTVPGSGKYVAPGMRGDRPAVTGGAERRSEE). In terms of domain architecture, RRM spans 208–286 (NTCRVTNLPE…LVLKVEWTRF (79 aa)).

This sequence belongs to the eIF-3 subunit G family. Component of the eukaryotic translation initiation factor 3 (eIF-3) complex.

The protein localises to the cytoplasm. Its function is as follows. RNA-binding component of the eukaryotic translation initiation factor 3 (eIF-3) complex, which is involved in protein synthesis of a specialized repertoire of mRNAs and, together with other initiation factors, stimulates binding of mRNA and methionyl-tRNAi to the 40S ribosome. The eIF-3 complex specifically targets and initiates translation of a subset of mRNAs involved in cell proliferation. This subunit can bind 18S rRNA. The sequence is that of Eukaryotic translation initiation factor 3 subunit G from Brugia malayi (Filarial nematode worm).